A 203-amino-acid chain; its full sequence is Ribonuclease HII (203 aa).

The RNase H type-2 domain maps to Gly-18–Ala-203. A divalent metal cation contacts are provided by Asp-24, Glu-25, and Asp-116.

It belongs to the RNase HII family. Mn(2+) is required as a cofactor. It depends on Mg(2+) as a cofactor.

The protein localises to the cytoplasm. It carries out the reaction Endonucleolytic cleavage to 5'-phosphomonoester.. In terms of biological role, endonuclease that specifically degrades the RNA of RNA-DNA hybrids. In Shewanella halifaxensis (strain HAW-EB4), this protein is Ribonuclease HII.